Reading from the N-terminus, the 137-residue chain is ATP synthase epsilon chain, chloroplastic (137 aa).

The protein belongs to the ATPase epsilon chain family. F-type ATPases have 2 components, CF(1) - the catalytic core - and CF(0) - the membrane proton channel. CF(1) has five subunits: alpha(3), beta(3), gamma(1), delta(1), epsilon(1). CF(0) has three main subunits: a, b and c.

It is found in the plastid. It localises to the chloroplast thylakoid membrane. Produces ATP from ADP in the presence of a proton gradient across the membrane. The chain is ATP synthase epsilon chain, chloroplastic from Bigelowiella natans (Pedinomonas minutissima).